The sequence spans 356 residues: MDTSRKIIHIDMDAFYASVEQRDHPEFRGKPLIIGGDPNKRGVVATCSYEARKFGVHSAMPTRQAAKLCPNGIFIHGNMAHYVEVSNQIREIFSRYTDIIEPLSLDEAYLDVTENKKGMKSATMVARDIQQTIYHELGLTASAGVSFNKFIAKIASDFKKPAGMTVVAPEEAEAFLEQIPVTKFYGVGKVTAEKLHRLGIETGADLKKWSEWDLIRELHKHGYHLYRHVRGRSNNIVNPHRDRKSVGKETTFEFNVLDSRILEQSLMQFAKKVEARLIKLQKHGKTVVLKLRYSDFTTITKRLTLNEYTNDANQIYQAAALLLRESYTGQDSIRLIGLTVTNLKPVYFENLRLEGL.

The 182-residue stretch at 7-188 folds into the UmuC domain; the sequence is IIHIDMDAFY…IPVTKFYGVG (182 aa). Residues Asp-11 and Asp-106 each coordinate Mg(2+). Residue Glu-107 is part of the active site.

It belongs to the DNA polymerase type-Y family. As to quaternary structure, monomer. The cofactor is Mg(2+).

It is found in the cytoplasm. It catalyses the reaction DNA(n) + a 2'-deoxyribonucleoside 5'-triphosphate = DNA(n+1) + diphosphate. Functionally, poorly processive, error-prone DNA polymerase involved in untargeted mutagenesis. Copies undamaged DNA at stalled replication forks, which arise in vivo from mismatched or misaligned primer ends. These misaligned primers can be extended by PolIV. Exhibits no 3'-5' exonuclease (proofreading) activity. May be involved in translesional synthesis, in conjunction with the beta clamp from PolIII. This Listeria welshimeri serovar 6b (strain ATCC 35897 / DSM 20650 / CCUG 15529 / CIP 8149 / NCTC 11857 / SLCC 5334 / V8) protein is DNA polymerase IV.